The chain runs to 503 residues: UDP-N-acetylmuramate--L-alanine ligase (503 aa).

An ATP-binding site is contributed by 120–126 (GTHGKTS).

This sequence belongs to the MurCDEF family.

It localises to the cytoplasm. It catalyses the reaction UDP-N-acetyl-alpha-D-muramate + L-alanine + ATP = UDP-N-acetyl-alpha-D-muramoyl-L-alanine + ADP + phosphate + H(+). Its pathway is cell wall biogenesis; peptidoglycan biosynthesis. Functionally, cell wall formation. The chain is UDP-N-acetylmuramate--L-alanine ligase from Rhodococcus opacus (strain B4).